The primary structure comprises 872 residues: Lysosomal cholesterol signaling protein (872 aa).

Over Met1–Ser40 the chain is Lumenal. Residues Ser3–Met372 are PIN-like transporter. N-linked (GlcNAc...) asparagine glycosylation is found at Asn11, Asn17, and Asn31. Residues Ile41–Ala61 traverse the membrane as a helical segment. Positions 45 and 59 each coordinate cholesterol. Residues Gly62–Arg81 are Cytoplasmic-facing. The chain crosses the membrane as a helical span at residues Phe82–Trp102. The Lumenal portion of the chain corresponds to Ser103–Tyr106. Residues Ser107–Ala127 form a helical membrane-spanning segment. Residues Ser128 to Lys135 lie on the Cytoplasmic side of the membrane. Residues Ala136 to Val156 traverse the membrane as a discontinuously helical segment. Residues Glu157 to Gln169 are Lumenal-facing. Residues Tyr170–Cys190 form a helical membrane-spanning segment. At Glu191–Arg215 the chain is on the cytoplasmic side. The discontinuously helical transmembrane segment at Val216–Asp236 threads the bilayer. Residues Arg237–Asn245 lie on the Lumenal side of the membrane. A discontinuously helical membrane pass occupies residues Phe246–Met266. The Cytoplasmic segment spans residues Val267–Lys275. 3 residues coordinate cholesterol: Gly268, Lys269, and Ile270. Residues Ser276–Cys296 traverse the membrane as a helical segment. Residues Arg297–Asn317 lie on the Lumenal side of the membrane. N-linked (GlcNAc...) asparagine glycosylation is present at Asn311. The chain crosses the membrane as a discontinuously helical span at residues Tyr318–Phe338. Residues Asn339–Gly348 lie on the Cytoplasmic side of the membrane. A helical membrane pass occupies residues Met349–Phe369. Residues Pro370 to Asn383 are Lumenal-facing. The segment at Gln382–Leu719 is GPCR. Asn383 carries N-linked (GlcNAc...) asparagine glycosylation. A helical transmembrane segment spans residues Val384–Leu404. Residues Leu405–Leu416 lie on the Cytoplasmic side of the membrane. A helical membrane pass occupies residues Thr417 to Val437. Residues Lys438 to Lys440 are Lumenal-facing. The helical transmembrane segment at Asn441–Leu461 threads the bilayer. At Trp462–Pro482 the chain is on the cytoplasmic side. A helical transmembrane segment spans residues Val483–Ile503. Over Thr504 to Gln522 the chain is Lumenal. The helical transmembrane segment at Met523–Cys543 threads the bilayer. Over Met544–Leu662 the chain is Cytoplasmic. Arg659 is a binding site for cholesterol. Residues Leu663–Phe683 form a helical membrane-spanning segment. Topologically, residues Asn684–Glu693 are lumenal. A helical membrane pass occupies residues Leu694–Gly714. Residues Leu715–Thr872 are Cytoplasmic-facing. The DEP domain occupies Tyr759–Gln837.

In terms of assembly, homodimer; via the transporter region and DEP domain. Interacts with the GATOR1 complex; preventing interaction between GATOR1 and KICSTOR; interaction is disrupted upon cholesterol starvation.

It is found in the lysosome membrane. Functionally, cholesterol-binding protein that acts as a regulator of mTORC1 signaling pathway. Acts as a sensor of cholesterol to signal cholesterol sufficiency to mTORC1: in presence of cholesterol, binds cholesterol, leading to disruption of the interaction between the GATOR1 and KICSTOR complexes and promotion of mTORC1 signaling. Upon cholesterol starvation, GPR155/LYCHOS is unable to perturb the association between GATOR1 and KICSTOR, leading to mTORC1 signaling inhibition. Binds indole-3-acetic acid and may play a role in tryptophan metabolism. The sequence is that of Lysosomal cholesterol signaling protein (GPR155) from Pongo abelii (Sumatran orangutan).